Here is a 221-residue protein sequence, read N- to C-terminus: Glutathione peroxidase (221 aa).

The N-terminal stretch at 1–19 is a signal peptide; the sequence is MFIQLLILSYAILLQLIAT. N28 is a glycosylation site (N-linked (GlcNAc...) asparagine). Residue C72 is part of the active site. N87 and N90 each carry an N-linked (GlcNAc...) asparagine glycan.

The protein belongs to the glutathione peroxidase family. Homotetramer.

It is found in the secreted. The protein resides in the extracellular space. The enzyme catalyses 2 glutathione + H2O2 = glutathione disulfide + 2 H2O. The sequence is that of Glutathione peroxidase from Dirofilaria immitis (Canine heartworm).